A 234-amino-acid chain; its full sequence is Glutathione S-transferase U16 (234 aa).

The 81-residue stretch at 5-85 (EEVKLLGVWY…YIDETWNSSA (81 aa)) folds into the GST N-terminal domain. Residues 15 to 16 (SP), 42 to 43 (SK), 56 to 57 (KV), and 69 to 70 (ES) each bind glutathione. The GST C-terminal domain maps to 92–219 (HPYDRALARF…APEIEKVAEF (128 aa)).

It belongs to the GST superfamily. Tau family.

It is found in the cytoplasm. The protein resides in the cytosol. The catalysed reaction is RX + glutathione = an S-substituted glutathione + a halide anion + H(+). May be involved in the conjugation of reduced glutathione to a wide number of exogenous and endogenous hydrophobic electrophiles and have a detoxification role against certain herbicides. The chain is Glutathione S-transferase U16 (GSTU16) from Arabidopsis thaliana (Mouse-ear cress).